Consider the following 115-residue polypeptide: CRISPR-associated endoribonuclease Cas2 (115 aa).

Residue Asp-22 participates in Mg(2+) binding.

It belongs to the CRISPR-associated endoribonuclease Cas2 protein family. Homodimer, forms a heterotetramer with a Cas1 homodimer. The cofactor is Mg(2+).

CRISPR (clustered regularly interspaced short palindromic repeat), is an adaptive immune system that provides protection against mobile genetic elements (viruses, transposable elements and conjugative plasmids). CRISPR clusters contain sequences complementary to antecedent mobile elements and target invading nucleic acids. CRISPR clusters are transcribed and processed into CRISPR RNA (crRNA). Functions as a ssRNA-specific endoribonuclease. Involved in the integration of spacer DNA into the CRISPR cassette. This Flavobacterium psychrophilum (strain ATCC 49511 / DSM 21280 / CIP 103535 / JIP02/86) protein is CRISPR-associated endoribonuclease Cas2.